Reading from the N-terminus, the 488-residue chain is Mannosylglycerate hydrolase MGH1 (488 aa).

Residues Tyr94, 98-101 (WNWD), Tyr146, Gln167, and Gly227 each bind substrate. The Proton donor role is filled by Asp229. Substrate contacts are provided by residues Arg262 and 415–416 (YW). Glu459 functions as the Proton acceptor in the catalytic mechanism.

This sequence belongs to the glycosyl hydrolase 63 family.

The catalysed reaction is (2R)-2-O-(alpha-D-mannosyl)-glycerate + H2O = D-mannose + (R)-glycerate. The enzyme catalyses (2R)-2-O-(alpha-D-glucopyranosyl)-glycerate + H2O = (R)-glycerate + D-glucose. With respect to regulation, activity is not dependent on divalent cations, but it is enhanced by Mn(2+). Its function is as follows. Catalyzes the hydrolysis of alpha-D-mannosyl-glycerate (MG) to D-glycerate and D-mannose. Can also hydrolyze alpha-D-glucopyranosyl-glycerate (GG)with lower efficiency. The polypeptide is Mannosylglycerate hydrolase MGH1 (Selaginella moellendorffii (Spikemoss)).